We begin with the raw amino-acid sequence, 585 residues long: Arginine--tRNA ligase (585 aa).

The short motif at 131–141 (ANPTGPMHVGH) is the 'HIGH' region element.

This sequence belongs to the class-I aminoacyl-tRNA synthetase family. As to quaternary structure, monomer.

The protein resides in the cytoplasm. It catalyses the reaction tRNA(Arg) + L-arginine + ATP = L-arginyl-tRNA(Arg) + AMP + diphosphate. The protein is Arginine--tRNA ligase of Rhizobium meliloti (strain 1021) (Ensifer meliloti).